The primary structure comprises 507 residues: DNA nucleotidylexotransferase (507 aa).

The Nuclear localization signal signature appears at 11–17; it reads PLRKKAK. Positions 27–124 constitute a BRCT domain; sequence QHNVKFKEIV…RPVEIQNRHL (98 aa). Residues 254–258 form an involved in DNA binding region; sequence VGLKT. A 2'-deoxyribonucleoside 5'-triphosphate is bound by residues 329 to 334 and 338 to 341; these read GFRRGK and HDVD. Residues aspartate 339, aspartate 341, and aspartate 431 each contribute to the Mg(2+) site. 446 to 447 lines the a 2'-deoxyribonucleoside 5'-triphosphate pocket; it reads GW.

It belongs to the DNA polymerase type-X family. Requires Mg(2+) as cofactor. Found in the thymus and not in the spleen, kidney, intestine, or liver.

It localises to the nucleus. The enzyme catalyses DNA(n) + a 2'-deoxyribonucleoside 5'-triphosphate = DNA(n+1) + diphosphate. Functionally, template-independent DNA polymerase which catalyzes the random addition of deoxynucleoside 5'-triphosphate to the 3'-end of a DNA initiator. One of the in vivo functions of this enzyme is the addition of nucleotides at the junction (N region) of rearranged Ig heavy chain and T-cell receptor gene segments during the maturation of B- and T-cells. This is DNA nucleotidylexotransferase (dntt) from Xenopus laevis (African clawed frog).